The following is a 182-amino-acid chain: Peptide methionine sulfoxide reductase MsrA (182 aa).

The active site involves cysteine 13.

The protein belongs to the MsrA Met sulfoxide reductase family.

It catalyses the reaction L-methionyl-[protein] + [thioredoxin]-disulfide + H2O = L-methionyl-(S)-S-oxide-[protein] + [thioredoxin]-dithiol. The catalysed reaction is [thioredoxin]-disulfide + L-methionine + H2O = L-methionine (S)-S-oxide + [thioredoxin]-dithiol. Its function is as follows. Has an important function as a repair enzyme for proteins that have been inactivated by oxidation. Catalyzes the reversible oxidation-reduction of methionine sulfoxide in proteins to methionine. The sequence is that of Peptide methionine sulfoxide reductase MsrA from Mycobacterium bovis (strain ATCC BAA-935 / AF2122/97).